A 387-amino-acid polypeptide reads, in one-letter code: MSNGAFDAIFEYAWGQIDKPISGDFIYGKDLPKLIEIIENIFQKAQKSGSYELRLPLFSEINKDLFRTFSNTKTFFKIHKEEFDDIFFNLVNHPLREILENAFIGVDSIPSDFIVSMNLNSPSKFLVENKSKNTEGAGISTSRKKLTESPIKLLSRNNIGKALEVQVEELKRELTAKQSLLQENERQVSELKIRLETYQEKYASIQQRFSDLQKARQVEDNQNSSRTSDPGSPLVTGIDQKAILEEFRRRLQRQTDTISFLKDQIRRERGLNCSNDKVSHSKRKHATTDGDGTFKNFISAVPSNIWVKATIRIIVCFALLAGVLPYIRKYVYAHDTPSQNSRLQLSWWENSGILSKIVWFFEDQTDLETEYRSNANVDDAYSRVFGI.

Positions 157–269 form a coiled coil; the sequence is NNIGKALEVQ…FLKDQIRRER (113 aa). Positions 216-235 are disordered; the sequence is RQVEDNQNSSRTSDPGSPLV. The segment covering 220-230 has biased composition (polar residues); the sequence is DNQNSSRTSDP. A helical membrane pass occupies residues 311 to 327; sequence IRIIVCFALLAGVLPYI.

This sequence belongs to the MPS2 family. In terms of assembly, interacts with BBP1, MPS3, and SPC24.

Its subcellular location is the nucleus membrane. It localises to the cytoplasm. The protein resides in the cytoskeleton. It is found in the microtubule organizing center. The protein localises to the spindle pole body. Component of the spindle pole body (SPB) required for insertion of the nascent SPB into the nuclear envelope and for the proper execution of spindle pole body (SPB) duplication. The protein is Monopolar spindle protein 2 (MPS2) of Saccharomyces cerevisiae (strain RM11-1a) (Baker's yeast).